We begin with the raw amino-acid sequence, 1270 residues long: Myosin-3 (1270 aa).

The interval 1-20 (MAVIKKGARRKDVKEPKKRS) is disordered. The Myosin motor domain maps to 36 to 715 (VGVSDLTLLS…SLFALEDMRD (680 aa)). An ATP-binding site is contributed by 129–136 (GESGAGKT). Ser357 bears the Phosphoserine mark. The segment at 404–486 (SIGILDIYGF…PGILAAMNDS (83 aa)) is actin-binding. IQ domains are found at residues 719–739 (YNMAARIQRAWRRFLQRRIDA) and 740–765 (AIKIQRTIREKKGGNKYVKLRDYGTK). The TH1 domain maps to 771–961 (KERRSMSLLG…TIYVRRGHPA (191 aa)). 3 disordered regions span residues 951–1015 (STIY…QKPV), 1029–1136 (YNPK…GSSS), and 1215–1270 (VQFG…DDDW). A compositionally biased stretch (basic residues) spans 980 to 1000 (IKSKKSKHKSTHKHTHSHRSH). Low complexity predominate over residues 1066 to 1078 (KKASSSHKSSSAK). Over residues 1089–1098 (GVEKNKEPLK) the composition is skewed to basic and acidic residues. Residues 1107–1116 (PIPPPPPPMG) are compositionally biased toward pro residues. The SH3 domain occupies 1118 to 1180 (PKDPKFEAAY…PTAYMTPYKD (63 aa)). Over residues 1215–1234 (VQFGSATVGPTSDNQSNPVG) the composition is skewed to polar residues. Residues 1256–1270 (ADDDDNDDGDDDDDW) show a composition bias toward acidic residues.

This sequence belongs to the TRAFAC class myosin-kinesin ATPase superfamily. Myosin family. As to quaternary structure, interacts (via myosin motor domain) with SHE4; this interaction is important for proper localization and may regulate the interaction of the motor domain with actin. Interacts (via SH3 domain) with VRP1; this interaction is required for localization to sites of polarized growth and may regulate the interaction of the tail domain with actin. Interacts (via SH3 domain) with PAN1; this interaction is important for late stages of endocytopsis. Interacts (via SH3 domain) with BBC1 and LAS17. Interacts (via C-terminal acidic tail) with ARC19 and ARC40; ARC19 and ARC40 are Arp2/3 complex subunits. In terms of processing, phosphorylation of the TEDS site (Ser-357) is required for the polarization of the actin cytoskeleton and for ligand-induced, but not for constitutive internalization of STE2. Phosphorylation probably activates the myosin-I ATPase. Ser-357 is phosphorylated by CLA4 and STE20 in vitro.

The protein localises to the cytoplasm. It localises to the cytoskeleton. It is found in the actin patch. Functionally, one of two redundant type-I myosins implicated in the organization of the actin cytoskeleton. Required for proper actin cytoskeleton polarization and for the internalization step in endocytosis. At the cell cortex, assembles in patch-like structures together with proteins from the actin-polymerizing machinery and promotes actin assembly. Functions redundantly with LAS17 as actin nucleation-promoting factor (NPF) for the Arp2/3 complex. Motor domain phosphorylation by PAK kinases CLA4 and STE20 promotes CDC42-regulated actin assembly. Functions together with the NPF PAN1 in late stages of endocytosis. Motor domain phosphorylation by PDK1 kinases PKH1 and PKH2, and by SGK kinases YPK1 and YPK2, promotes ligand-induced, but not constitutive endocytosis of the G protein-coupled receptor STE2. This chain is Myosin-3 (MYO3), found in Saccharomyces cerevisiae (strain YJM789) (Baker's yeast).